Reading from the N-terminus, the 124-residue chain is UPF0337 protein blr1496 (124 aa).

It belongs to the UPF0337 (CsbD) family.

The chain is UPF0337 protein blr1496 from Bradyrhizobium diazoefficiens (strain JCM 10833 / BCRC 13528 / IAM 13628 / NBRC 14792 / USDA 110).